A 350-amino-acid chain; its full sequence is Leucine-rich repeat-containing protein 58 (350 aa).

LRR repeat units lie at residues Asn-14–Lys-34, Asp-35–Phe-56, His-58–Thr-80, Lys-81–Gly-102, Arg-105–Gln-125, Thr-128–Leu-149, Ser-151–Pro-173, Tyr-174–Val-195, Ser-197–Leu-218, and His-220–Thr-240.

This chain is Leucine-rich repeat-containing protein 58 (lrrc58), found in Xenopus laevis (African clawed frog).